Reading from the N-terminus, the 691-residue chain is Elongation factor G (691 aa).

Positions 10–284 constitute a tr-type G domain; that stretch reads KMYRNIGIMA…AIVKYLPSPL (275 aa). Residues 19-26, 83-87, and 137-140 contribute to the GTP site; these read AHIDAGKT, DTPGH, and NKMD.

It belongs to the TRAFAC class translation factor GTPase superfamily. Classic translation factor GTPase family. EF-G/EF-2 subfamily.

The protein localises to the cytoplasm. Catalyzes the GTP-dependent ribosomal translocation step during translation elongation. During this step, the ribosome changes from the pre-translocational (PRE) to the post-translocational (POST) state as the newly formed A-site-bound peptidyl-tRNA and P-site-bound deacylated tRNA move to the P and E sites, respectively. Catalyzes the coordinated movement of the two tRNA molecules, the mRNA and conformational changes in the ribosome. This is Elongation factor G from Clostridium tetani (strain Massachusetts / E88).